A 694-amino-acid chain; its full sequence is Putative ankyrin repeat protein RBE_0921 (694 aa).

10 ANK repeats span residues 122–151 (LGKTPLQYAIINDKPELAKLLIDAGANINV), 155–185 (NGRNLFELAMYNSASDQTFELLLKTNININS), 216–245 (FNRTLLHQAAERNNIKKAQISINHNINVEA), 249–275 (TGETALHMLKTSKMAKILLKAGSNTEA), 279–317 (LGRTPLHNAILQANKRQVNIKNIHNIVLKLIKSGANPNA), 321–350 (YGFTPLEYAIRINDSKIFKLLIKNNAKFKK), 351–382 (NRYELFCQALESGNLTATKYLFKKEFLNNIND), 384–413 (NGQNYLYYIATGGNKEVLEYLVKKNHDNGK), 423–452 (QRNTPIHIAAQNGQFEIIKNFQKLGFDINA), and 456–485 (DGETVLHILARAQNGEMIKELIKLGADINI).

The polypeptide is Putative ankyrin repeat protein RBE_0921 (Rickettsia bellii (strain RML369-C)).